Here is a 422-residue protein sequence, read N- to C-terminus: Telomerase-associated protein of 50 kDa (422 aa).

In terms of assembly, component of the telomerase holoenzyme complex, composed of the catalytic core (the catalytic subunit TERT, the telomerase RNA template component TER and TAP65/p65), which is associated with two heterotrimeric subcomplexes: (i) the replication protein A (RPA)-related subcomplex, composed of TEB1, RPA2/TEB2 and RPA3/TEB3 and (ii) the CST-like subcomplex, composed of TAP75/p75, TAP45/p45 and TAP19/p19. TEB1 and the CST-like subcomplex are tethered to the catalytic core by TAP50/p50.

The protein localises to the chromosome. The protein resides in the telomere. Its function is as follows. Tethering component of the holoenzyme telomerase ribonucleoprotein (RNP) complex. Telomerase is an essential ribonucleoprotein enzyme that copies new telomeric repeats onto chromosome ends by repetitively synthesizing the short telomere-repeat sequence 5'-TTGGGG-3' using an RNA template component TER. In the telomerase holoenzyme complex, acts as a hub that anchors the two heterotrimeric subcomplexes with the catalytic core. This chain is Telomerase-associated protein of 50 kDa, found in Tetrahymena thermophila (strain SB210).